The chain runs to 387 residues: Methylthioribose-1-phosphate isomerase (387 aa).

Catalysis depends on Asp-257, which acts as the Proton donor.

It belongs to the eIF-2B alpha/beta/delta subunits family. MtnA subfamily.

It is found in the cytoplasm. The protein resides in the nucleus. The enzyme catalyses 5-(methylsulfanyl)-alpha-D-ribose 1-phosphate = 5-(methylsulfanyl)-D-ribulose 1-phosphate. The protein operates within amino-acid biosynthesis; L-methionine biosynthesis via salvage pathway; L-methionine from S-methyl-5-thio-alpha-D-ribose 1-phosphate: step 1/6. Functionally, catalyzes the interconversion of methylthioribose-1-phosphate (MTR-1-P) into methylthioribulose-1-phosphate (MTRu-1-P). This Aspergillus fumigatus (strain CBS 144.89 / FGSC A1163 / CEA10) (Neosartorya fumigata) protein is Methylthioribose-1-phosphate isomerase (mri1).